The chain runs to 248 residues: Killer cell lectin-like receptor subfamily I member 1 (248 aa).

At 1 to 80 (MLHSKRREYT…RQGPKSTVWR (80 aa)) the chain is on the cytoplasmic side. 2 consecutive short sequence motifs (ITIM motif) follow at residues 16 to 21 (VTYTEL) and 47 to 52 (LKYGEL). Residues 81–101 (VVTGMLGALCVVLMTTTGILL) form a helical; Signal-anchor for type II membrane protein membrane-spanning segment. Residues 102-248 (PKLFSSQEEQ…KKSYICEFNI (147 aa)) lie on the Extracellular side of the membrane. 3 cysteine pairs are disulfide-bonded: cysteine 132–cysteine 145, cysteine 161–cysteine 244, and cysteine 223–cysteine 236. One can recognise a C-type lectin domain in the interval 139 to 245 (FGNNFYCVFK…CSAKKSYICE (107 aa)). 3 N-linked (GlcNAc...) asparagine glycosylation sites follow: asparagine 197, asparagine 214, and asparagine 220.

As to quaternary structure, heterodimer with KLRE1. Interacts with PTPN6. As to expression, expressed in natural killer (NK) cells.

Its subcellular location is the cell membrane. In terms of biological role, lectin-like receptor for natural killer (NK) cells. Heterodimer formation with KLRE1 mediates inhibition of NK cell cytolytic activity. The protein is Killer cell lectin-like receptor subfamily I member 1 of Mus musculus (Mouse).